The sequence spans 258 residues: MKITKIEKKKRLYLLELDDSEKLYITEDTIVRFMLSKGMEITEQELSEIQDYAQFSYGKNLALYHLSFKQRTAKEVKDFLTQHDIQPEIISQVLDNLKKDNWINDRKYAHSFIQSNLLTGDKGAFVLKQKLSQKGISSTIIEEELSQFDFTELTNKVAEKLLKKYQEKLPSKALQDKILQSLINKGFSYSQAKTAYQHLEIEEDQENQQELLYKELDKQYRKYSKKYDGYDLKQRLTQALARKGYDFSDIASALREYL.

The protein belongs to the RecX family.

Its subcellular location is the cytoplasm. In terms of biological role, modulates RecA activity. In Streptococcus sanguinis (strain SK36), this protein is Regulatory protein RecX.